Reading from the N-terminus, the 373-residue chain is ATP phosphoribosyltransferase regulatory subunit (373 aa).

This sequence belongs to the class-II aminoacyl-tRNA synthetase family. HisZ subfamily. In terms of assembly, heteromultimer composed of HisG and HisZ subunits.

Its subcellular location is the cytoplasm. It participates in amino-acid biosynthesis; L-histidine biosynthesis; L-histidine from 5-phospho-alpha-D-ribose 1-diphosphate: step 1/9. Required for the first step of histidine biosynthesis. May allow the feedback regulation of ATP phosphoribosyltransferase activity by histidine. The chain is ATP phosphoribosyltransferase regulatory subunit from Rhizobium etli (strain ATCC 51251 / DSM 11541 / JCM 21823 / NBRC 15573 / CFN 42).